A 92-amino-acid polypeptide reads, in one-letter code: UPF0473 protein Cbei_1107 (92 aa).

Belongs to the UPF0473 family.

The sequence is that of UPF0473 protein Cbei_1107 from Clostridium beijerinckii (strain ATCC 51743 / NCIMB 8052) (Clostridium acetobutylicum).